The sequence spans 571 residues: MIETSKRSRIINKINNVVISDYKGAIFVWGPKSTGKYTTIKHVLESNSRIYCEADCNEHYSTASLFRSLLSTLRNINKFGRRKPINYDDDDEYINNDINKDNEEDNNNNNNNNNNNNNNNNNNNNNNNNNNNDGYDDGYDDDYDYKDKSLNERIELLKINDLSKEFNNMIIKSQIYSKKIPATSIPSVSEMVQVLYEKASTNETISIILRHSEKLMKFEGEFFYSLFKIEEFTDHPVCLYLLSEIPTERILSTGKEFKPIRNIHFPQYEPNEICSIVLNFKPNFSIINYNQNNNDSNNSNNNNNNNNHLKLKEEDNIKLYNKLVELVVRVFHTTTRDIIDIIFVCHNLFPNYIEPIYNGTCGVEDSDSILYQNIESKIVKSLRNITEKDEIVLEDQKRQQETYQIYPPQQVPQQQKQQEKEKEKEKGRQLASYSDAKNIPYHMKIVLISCFLASSFSRNKDKLLYTKEAVKRQSLSNEKTTGSKWFHFQRAREIGYKLFPSEKKALFQESIFKSLASLKYLETISSIEPAFTYKFKCTRRVHLEFIKQISASINFKIDTYLEAAQFQIISK.

Disordered stretches follow at residues 90–142 and 404–430; these read DDEY…YDDD and QIYP…GRQL. Low complexity-rich tracts occupy residues 107 to 133 and 407 to 416; these read NNNN…NNND and PPQQVPQQQK. The segment covering 417-428 has biased composition (basic and acidic residues); that stretch reads QQEKEKEKEKGR.

It belongs to the ORC1 family. In terms of assembly, ORC is composed of six subunits.

It is found in the nucleus. Functionally, component of the origin recognition complex (ORC) that binds origins of replication. DNA-binding is ATP-dependent, however specific DNA sequences that define origins of replication have not been identified so far. ORC is required to assemble the pre-replication complex necessary to initiate DNA replication. The polypeptide is Origin recognition complex subunit 5 (orcE) (Dictyostelium discoideum (Social amoeba)).